A 377-amino-acid polypeptide reads, in one-letter code: Chaperone protein DnaJ (377 aa).

The J domain occupies 5–70; sequence DYYEVLGVAK…QKRAAYDRYG (66 aa). The CR-type zinc-finger motif lies at 137–215; sequence GFDTEIRVPS…CDGVGRTRRN (79 aa). Positions 150, 153, 167, 170, 189, 192, 203, and 206 each coordinate Zn(2+). CXXCXGXG motif repeat units follow at residues 150–157, 167–174, 189–196, and 203–210; these read CDTCHGSG, CRTCGGSG, CPTCHGTG, and CPSCDGVG.

It belongs to the DnaJ family. Homodimer. Requires Zn(2+) as cofactor.

The protein localises to the cytoplasm. In terms of biological role, participates actively in the response to hyperosmotic and heat shock by preventing the aggregation of stress-denatured proteins and by disaggregating proteins, also in an autonomous, DnaK-independent fashion. Unfolded proteins bind initially to DnaJ; upon interaction with the DnaJ-bound protein, DnaK hydrolyzes its bound ATP, resulting in the formation of a stable complex. GrpE releases ADP from DnaK; ATP binding to DnaK triggers the release of the substrate protein, thus completing the reaction cycle. Several rounds of ATP-dependent interactions between DnaJ, DnaK and GrpE are required for fully efficient folding. Also involved, together with DnaK and GrpE, in the DNA replication of plasmids through activation of initiation proteins. The chain is Chaperone protein DnaJ from Bordetella parapertussis (strain 12822 / ATCC BAA-587 / NCTC 13253).